Here is a 245-residue protein sequence, read N- to C-terminus: 5'-nucleotidase SurE (245 aa).

D8, D9, S39, and N91 together coordinate a divalent metal cation.

It belongs to the SurE nucleotidase family. Requires a divalent metal cation as cofactor.

The protein localises to the cytoplasm. The catalysed reaction is a ribonucleoside 5'-phosphate + H2O = a ribonucleoside + phosphate. Nucleotidase that shows phosphatase activity on nucleoside 5'-monophosphates. The chain is 5'-nucleotidase SurE from Janthinobacterium sp. (strain Marseille) (Minibacterium massiliensis).